We begin with the raw amino-acid sequence, 210 residues long: Large ribosomal subunit protein uL3 (210 aa).

This sequence belongs to the universal ribosomal protein uL3 family. As to quaternary structure, part of the 50S ribosomal subunit. Forms a cluster with proteins L14 and L19.

Its function is as follows. One of the primary rRNA binding proteins, it binds directly near the 3'-end of the 23S rRNA, where it nucleates assembly of the 50S subunit. The protein is Large ribosomal subunit protein uL3 of Caldicellulosiruptor saccharolyticus (strain ATCC 43494 / DSM 8903 / Tp8T 6331).